Here is a 160-residue protein sequence, read N- to C-terminus: Cyanate hydratase (160 aa).

Active-site residues include R100, E103, and S126.

This sequence belongs to the cyanase family.

The enzyme catalyses cyanate + hydrogencarbonate + 3 H(+) = NH4(+) + 2 CO2. In terms of biological role, catalyzes the reaction of cyanate with bicarbonate to produce ammonia and carbon dioxide. The chain is Cyanate hydratase from Arthroderma otae (strain ATCC MYA-4605 / CBS 113480) (Microsporum canis).